A 462-amino-acid polypeptide reads, in one-letter code: tRNA modification GTPase MnmE (462 aa).

(6S)-5-formyl-5,6,7,8-tetrahydrofolate-binding residues include R27, E89, and R128. In terms of domain architecture, TrmE-type G spans 223 to 383; that stretch reads GLKIAIVGRP…LEAAILAAVG (161 aa). K(+) is bound at residue N233. Residues 233–238, 252–258, and 277–280 contribute to the GTP site; these read NVGKSS, TDLPGTT, and DTAG. S237 provides a ligand contact to Mg(2+). 3 residues coordinate K(+): T252, L254, and T257. T258 serves as a coordination point for Mg(2+). K462 is a binding site for (6S)-5-formyl-5,6,7,8-tetrahydrofolate.

The protein belongs to the TRAFAC class TrmE-Era-EngA-EngB-Septin-like GTPase superfamily. TrmE GTPase family. Homodimer. Heterotetramer of two MnmE and two MnmG subunits. K(+) serves as cofactor.

It localises to the cytoplasm. In terms of biological role, exhibits a very high intrinsic GTPase hydrolysis rate. Involved in the addition of a carboxymethylaminomethyl (cmnm) group at the wobble position (U34) of certain tRNAs, forming tRNA-cmnm(5)s(2)U34. This Synechococcus elongatus (strain ATCC 33912 / PCC 7942 / FACHB-805) (Anacystis nidulans R2) protein is tRNA modification GTPase MnmE.